The following is a 323-amino-acid chain: Putative divalent cation/proton antiporter TMEM165 (323 aa).

A signal peptide spans 1-33 (MAASARGSGRAPTRRLLVLLLLPLLWAPAGVRA). Residues 34-88 (GPEEDLSHRNQEPPAPAQQLQPQPAAVQGLEPARAEKGFTPAAPVHTNREDAATQ) are Lumenal-facing. The segment covering 35 to 44 (PEEDLSHRNQ) has biased composition (basic and acidic residues). The segment at 35–60 (PEEDLSHRNQEPPAPAQQLQPQPAAV) is disordered. The segment covering 50–59 (AQQLQPQPAA) has biased composition (low complexity). The chain crosses the membrane as a helical span at residues 89–109 (ANLGFIHAFVAAISVIIVSEL). Residues 110 to 126 (GDKTFFIAAIMAMRYNR) lie on the Cytoplasmic side of the membrane. Residues 127 to 147 (LTVLAGAMLALALMTCLSVLF) form a helical membrane-spanning segment. At 148–151 (GYAT) the chain is on the lumenal side. The chain crosses the membrane as a helical span at residues 152-172 (TVIPRVYTYYVSTALFAIFGI). Residues 173 to 227 (RMLREGLKMSPDEGQEELEEVQAELKKKDEEFQRTKLLNGPDVETGTSTAIPQKK) lie on the Cytoplasmic side of the membrane. Residues 184 to 211 (DEGQEELEEVQAELKKKDEEFQRTKLLN) are a coiled coil. A helical transmembrane segment spans residues 228 to 248 (WLHFISPIFVQALTLTFLAEW). Residues 249-266 (GDRSQLTTIVLAAREDPY) are Lumenal-facing. The chain crosses the membrane as a helical span at residues 267–287 (GVAVGGTVGHCLCTGLAVIGG). Residues 288 to 298 (RMIAQKISVRT) lie on the Cytoplasmic side of the membrane. Residues 299-319 (VTIIGGIVFLAFAFSALFISP) traverse the membrane as a helical segment. The Lumenal portion of the chain corresponds to 320–323 (ESGF).

Belongs to the GDT1 family.

It localises to the golgi apparatus membrane. The enzyme catalyses Ca(2+)(in) + n H(+)(out) = Ca(2+)(out) + n H(+)(in). It carries out the reaction Mn(2+)(in) + n H(+)(out) = Mn(2+)(out) + n H(+)(in). Its function is as follows. Putative divalent cation:proton antiporter that exchanges calcium or manganese ions for protons across the Golgi membrane. Mediates the reversible transport of calcium or manganese to the Golgi lumen driven by the proton gradient and possibly the membrane potential generated by V-ATPase. Provides calcium or manganese cofactors to resident Golgi enzymes and contributes to the maintenance of an acidic luminal Golgi pH required for proper functioning of the secretory pathway. Promotes Ca(2+) storage within the Golgi lumen of the mammary epithelial cells to be then secreted into milk. The transport mechanism and stoichiometry remains to be elucidated. The protein is Putative divalent cation/proton antiporter TMEM165 of Rattus norvegicus (Rat).